A 448-amino-acid polypeptide reads, in one-letter code: Antilisterial bacteriocin subtilosin biosynthesis protein AlbA (448 aa).

The Radical SAM core domain maps to 115–329; that stretch reads FPMPLHATFE…EQHVIDEFKD (215 aa). 6 residues coordinate [4Fe-4S] cluster: cysteine 129, cysteine 133, cysteine 136, cysteine 408, cysteine 414, and cysteine 417.

[4Fe-4S] cluster is required as a cofactor.

Its subcellular location is the cytoplasm. Its function is as follows. Catalyzes the formation of 3 thioether bonds during production of the sactipeptide subtilosin from SboA. In vitro the thioether bonds cannot be made in the absence of the SboA propeptide, suggesting this is the first reaction in subtilosin maturation. In vitro, in the absence of a second substrate, cleaves S-adenosyl-L-methionine into Met and 5'-dA. This Bacillus subtilis (strain 168) protein is Antilisterial bacteriocin subtilosin biosynthesis protein AlbA (albA).